We begin with the raw amino-acid sequence, 347 residues long: MVLVHVGYLVLPVFGSVRNRGAPFQRSQHPHATSCRHFHLGPPQPQQLAPDFPLAHPVQSQPGLSAHMAPAHQHSGTLHQSLTPLPTLQFQDVTGPSFLPQALHQQYLLQQQLLEAQHRRLVSHPRRNQDRVSVHPHRLHPSFDFGHQLQTPQPRYLAEGTDWDLSVDAGLSPAQFQVRPIPQHYQHYLATPRMHHFPRNSSSTQMVVHEIRNYPYPQLHFLALQGLNPSRHTSAVRESYEELLQLEDRLGNVTRGAVQNTIERFTFPHKYKKRRPQDSKGKKDEGEESDTDEKCTICLSMLEDGEDVRRLPCMHLFHQLCVDQWLAMSKKCPICRVDIETQLGADS.

2 disordered regions span residues 23-79 (PFQR…GTLH) and 268-289 (PHKYKKRRPQDSKGKKDEGEES). The segment at 267–269 (FPH) is ubiquitin binding. A compositionally biased stretch (basic and acidic residues) spans 276–285 (PQDSKGKKDE). Positions 295 and 298 each coordinate Zn(2+). Residues 295-336 (CTICLSMLEDGEDVRRLPCMHLFHQLCVDQWLAMSKKCPICR) form an RING-type; atypical zinc finger. A ubiquitin binding region spans residues 310-314 (RLPCM). Histidine 318 and cysteine 321 together coordinate Zn(2+).

It belongs to the Arkadia family. As to quaternary structure, monomer; binding to the ubiquitin-conjugating enzyme E2 does not trigger homodimerization. Expressed in neurons of the nervous system.

It localises to the nucleus. It catalyses the reaction S-ubiquitinyl-[E2 ubiquitin-conjugating enzyme]-L-cysteine + [acceptor protein]-L-lysine = [E2 ubiquitin-conjugating enzyme]-L-cysteine + N(6)-ubiquitinyl-[acceptor protein]-L-lysine.. Its activity is regulated as follows. Binds free ubiquitin non-covalently via its RING-type zinc finger. Ubiquitin-binding leads to enhance the E3 ubiquitin-protein ligase activity by stabilizing the ubiquitin-conjugating enzyme E2 (donor ubiquitin) in the 'closed' conformation and activating ubiquitin transfer. Functionally, E3 ubiquitin-protein ligase that acts as a regulator of motor axon elongation. Required for efficient motor axon extension in the dorsal forelimb by enhancing the transcriptional responses of the SMAD1/SMAD5/SMAD8 effectors, which are activated downstream of BMP. Acts by mediating ubiquitination and degradation of SMAD inhibitors such as SMAD6, SMAD7, SKI and SNON isoform of SKIL. The sequence is that of E3 ubiquitin-protein ligase ARK2C from Mus musculus (Mouse).